A 284-amino-acid polypeptide reads, in one-letter code: Bifunctional protein FolD 2 (284 aa).

NADP(+) contacts are provided by residues 165–167 (GRG), Thr-192, and Val-233.

Belongs to the tetrahydrofolate dehydrogenase/cyclohydrolase family. In terms of assembly, homodimer.

The catalysed reaction is (6R)-5,10-methylene-5,6,7,8-tetrahydrofolate + NADP(+) = (6R)-5,10-methenyltetrahydrofolate + NADPH. It catalyses the reaction (6R)-5,10-methenyltetrahydrofolate + H2O = (6R)-10-formyltetrahydrofolate + H(+). Its pathway is one-carbon metabolism; tetrahydrofolate interconversion. Functionally, catalyzes the oxidation of 5,10-methylenetetrahydrofolate to 5,10-methenyltetrahydrofolate and then the hydrolysis of 5,10-methenyltetrahydrofolate to 10-formyltetrahydrofolate. The protein is Bifunctional protein FolD 2 of Streptomyces avermitilis (strain ATCC 31267 / DSM 46492 / JCM 5070 / NBRC 14893 / NCIMB 12804 / NRRL 8165 / MA-4680).